The following is a 376-amino-acid chain: 12-oxophytodienoate reductase 1 (376 aa).

FMN-binding positions include 35 to 37 (PLT), A68, and Q110. Residues S143 and 187-190 (HGAH) contribute to the substrate site. Y192 serves as the catalytic Proton donor. R239 lines the FMN pocket. R279 contributes to the substrate binding site. FMN-binding positions include G309 and 330–331 (GR).

It belongs to the NADH:flavin oxidoreductase/NADH oxidase family. Requires FMN as cofactor. In terms of tissue distribution, constitutively expressed in roots, leaves, cotyledons, cells culture and to a lower extent in flowers.

The protein resides in the cytoplasm. It catalyses the reaction (1S,2S)-OPC-8 + NADP(+) = (9S,13S,15Z)-12-oxophyto-10,15-dienoate + NADPH + H(+). It participates in lipid metabolism; oxylipin biosynthesis. Its function is as follows. Specifically cleaves olefinic bonds in alpha,beta-unsaturated carbonyls and may be involved in detoxification or modification of these reactive compounds. May be involved in the biosynthesis or metabolism of oxylipin signaling molecules. In vitro, reduces 9R,13R-12-oxophyodienoic acid (9R,13R-OPDA) to 9R,13R-OPC-8:0, but not 9S,13S-OPDA, the natural precursor of jasmonic acid. Also reduces N-ethylmaleimide and maleic acid. This is 12-oxophytodienoate reductase 1 (OPR1) from Solanum lycopersicum (Tomato).